The primary structure comprises 66 residues: Large ribosomal subunit protein bL35 (66 aa).

Over residues 1–46 the composition is skewed to basic residues; that stretch reads MPKMKTHRASAKRFKRTGNGGLKRHHAFTGHRFHGKTKKQRRHLRK. Positions 1 to 50 are disordered; it reads MPKMKTHRASAKRFKRTGNGGLKRHHAFTGHRFHGKTKKQRRHLRKAAMV.

Belongs to the bacterial ribosomal protein bL35 family.

The sequence is that of Large ribosomal subunit protein bL35 from Lactobacillus delbrueckii subsp. bulgaricus (strain ATCC 11842 / DSM 20081 / BCRC 10696 / JCM 1002 / NBRC 13953 / NCIMB 11778 / NCTC 12712 / WDCM 00102 / Lb 14).